The chain runs to 549 residues: Oxygen-dependent choline dehydrogenase (549 aa).

4-33 (DFVIIGSGSAGSAMAYRLSEDGRYSVIVIE) is an FAD binding site. H465 (proton acceptor) is an active-site residue.

This sequence belongs to the GMC oxidoreductase family. It depends on FAD as a cofactor.

It carries out the reaction choline + A = betaine aldehyde + AH2. The catalysed reaction is betaine aldehyde + NAD(+) + H2O = glycine betaine + NADH + 2 H(+). It participates in amine and polyamine biosynthesis; betaine biosynthesis via choline pathway; betaine aldehyde from choline (cytochrome c reductase route): step 1/1. Involved in the biosynthesis of the osmoprotectant glycine betaine. Catalyzes the oxidation of choline to betaine aldehyde and betaine aldehyde to glycine betaine at the same rate. This chain is Oxygen-dependent choline dehydrogenase, found in Brucella melitensis biotype 1 (strain ATCC 23456 / CCUG 17765 / NCTC 10094 / 16M).